The sequence spans 84 residues: Small ribosomal subunit protein uS17 (84 aa).

The protein belongs to the universal ribosomal protein uS17 family. In terms of assembly, part of the 30S ribosomal subunit.

Its function is as follows. One of the primary rRNA binding proteins, it binds specifically to the 5'-end of 16S ribosomal RNA. The protein is Small ribosomal subunit protein uS17 of Ureaplasma parvum serovar 3 (strain ATCC 27815 / 27 / NCTC 11736).